Here is a 101-residue protein sequence, read N- to C-terminus: Small ribosomal subunit protein uS14 (101 aa).

Belongs to the universal ribosomal protein uS14 family. Part of the 30S ribosomal subunit. Contacts proteins S3 and S10.

In terms of biological role, binds 16S rRNA, required for the assembly of 30S particles and may also be responsible for determining the conformation of the 16S rRNA at the A site. The chain is Small ribosomal subunit protein uS14 from Arthrobacter sp. (strain FB24).